Reading from the N-terminus, the 199-residue chain is Probable GTP-binding protein EngB (199 aa).

The EngB-type G domain occupies 28–199; the sequence is DIPEIALAGR…QAWDAILEQI (172 aa). GTP-binding positions include 36-43, 63-67, 81-84, 148-151, and 180-182; these read GRSNVGKS, GKTQL, DVPG, TKAD, and FSS. 2 residues coordinate Mg(2+): serine 43 and threonine 65.

It belongs to the TRAFAC class TrmE-Era-EngA-EngB-Septin-like GTPase superfamily. EngB GTPase family. Mg(2+) serves as cofactor.

Its function is as follows. Necessary for normal cell division and for the maintenance of normal septation. The sequence is that of Probable GTP-binding protein EngB from Streptococcus uberis (strain ATCC BAA-854 / 0140J).